The sequence spans 540 residues: Phosphoenolpyruvate carboxykinase (ATP) (540 aa).

R65 is a binding site for substrate. Position 87 is an N6-acetyllysine (K87). Substrate-binding residues include Y207 and K213. Residues K213, H232, and 248–256 (GLSGTGKTT) each bind ATP. Residues K213 and H232 each contribute to the Mn(2+) site. A Mn(2+)-binding site is contributed by D269. Residues E297, R333, 449–450 (RI), and T455 each bind ATP. R333 lines the substrate pocket. N6-acetyllysine is present on K523.

This sequence belongs to the phosphoenolpyruvate carboxykinase (ATP) family. As to quaternary structure, monomer. Requires Mn(2+) as cofactor.

It localises to the cytoplasm. The enzyme catalyses oxaloacetate + ATP = phosphoenolpyruvate + ADP + CO2. The protein operates within carbohydrate biosynthesis; gluconeogenesis. Involved in the gluconeogenesis. Catalyzes the conversion of oxaloacetate (OAA) to phosphoenolpyruvate (PEP) through direct phosphoryl transfer between the nucleoside triphosphate and OAA. This is Phosphoenolpyruvate carboxykinase (ATP) from Escherichia fergusonii (strain ATCC 35469 / DSM 13698 / CCUG 18766 / IAM 14443 / JCM 21226 / LMG 7866 / NBRC 102419 / NCTC 12128 / CDC 0568-73).